The primary structure comprises 519 residues: Fatty acid--[acyl-carrier-protein] ligase ScoC (519 aa).

Thr-167 serves as a coordination point for Mg(2+). ATP contacts are provided by Ile-216 and Thr-312. A Mg(2+)-binding site is contributed by Glu-313. ATP contacts are provided by Asp-394 and Lys-411.

It belongs to the ATP-dependent AMP-binding enzyme family. Mg(2+) serves as cofactor.

The catalysed reaction is a medium-chain fatty acid + holo-[ACP] + ATP = a medium-chain fatty acyl-[ACP] + AMP + diphosphate. It carries out the reaction a medium-chain fatty acid + ATP + H(+) = a medium-chain fatty acyl-AMP + diphosphate. The enzyme catalyses a medium-chain fatty acyl-AMP + holo-[ACP] = a medium-chain fatty acyl-[ACP] + AMP + H(+). It catalyses the reaction octanoate + holo-[ACP] + ATP = octanoyl-[ACP] + AMP + diphosphate. The catalysed reaction is octanoate + ATP + H(+) = octanoyl-AMP + diphosphate. It carries out the reaction octanoyl-AMP + holo-[ACP] = octanoyl-[ACP] + AMP + H(+). The enzyme catalyses a (2E)-enoyl fatty acid + holo-[ACP] + ATP = a (2E)-enoyl-[ACP] + AMP + diphosphate. It catalyses the reaction a (2E)-enoyl fatty acid + ATP + H(+) = a (2E)-2-fatty-enoyl-AMP + diphosphate. The catalysed reaction is a (2E)-2-fatty-enoyl-AMP + holo-[ACP] = a (2E)-enoyl-[ACP] + AMP + H(+). It carries out the reaction (2E)-2-butenoate + holo-[ACP] + ATP = (2E)-butenoyl-[ACP] + AMP + diphosphate. The enzyme catalyses (2E)-2-butenoate + ATP + H(+) = (2E)-but-2-enoyl-AMP + diphosphate. It catalyses the reaction (2E)-but-2-enoyl-AMP + holo-[ACP] = (2E)-butenoyl-[ACP] + AMP + H(+). The catalysed reaction is a (3R)-3-isocyanyl-fatty acid + holo-[ACP] + ATP = a (3R)-3-isocyanyl-fatty acyl-[ACP] + AMP + diphosphate. It carries out the reaction a (3R)-3-isocyanyl-fatty acid + ATP + H(+) = a (3R)-3-isocyanyl-fatty acyl-AMP + diphosphate. The enzyme catalyses a (3R)-3-isocyanyl-fatty acyl-AMP + holo-[ACP] = a (3R)-3-isocyanyl-fatty acyl-[ACP] + AMP + H(+). It catalyses the reaction (3R)-3-isocyanylbutanoate + holo-[ACP] + ATP = (3R)-3-isocyanylbutanoyl-[ACP] + AMP + diphosphate. The catalysed reaction is (3R)-3-isocyanylbutanoate + ATP + H(+) = (3R)-3-isocyanylbutanoyl-AMP + diphosphate. It carries out the reaction (3R)-3-isocyanylbutanoyl-AMP + holo-[ACP] = (3R)-3-isocyanylbutanoyl-[ACP] + AMP + H(+). Its function is as follows. Acyl:acyl-carrier protein ligase involved in the biosynthesis of a unique class of isonitrile lipopeptides (INLPs). Shows a strong preference for fatty acids with a short/medium-chain length (C4-C8) in vitro, and accepts alpha,beta-unsaturated fatty acids such as crotonate, which seems to be a physiological substrate. Acts twice during the INLP pathway, catalyzing the activation of crotonate ((2E)-2-butenoate) as well as (3R)-3-isocyanylbutanoate as acyl-adenylates (acyl-AMP), and then the acyl transfer to the dedicated acyl-carrier protein ScoB. This is Fatty acid--[acyl-carrier-protein] ligase ScoC from Streptomyces coeruleorubidus.